The following is a 126-amino-acid chain: Small ribosomal subunit protein uS13 (126 aa).

The disordered stretch occupies residues 94–126 (RNLPVHGQRTHTNARTRKGPRRAIAGKKKAGKK).

The protein belongs to the universal ribosomal protein uS13 family. Part of the 30S ribosomal subunit. Forms a loose heterodimer with protein S19. Forms two bridges to the 50S subunit in the 70S ribosome.

Its function is as follows. Located at the top of the head of the 30S subunit, it contacts several helices of the 16S rRNA. In the 70S ribosome it contacts the 23S rRNA (bridge B1a) and protein L5 of the 50S subunit (bridge B1b), connecting the 2 subunits; these bridges are implicated in subunit movement. Contacts the tRNAs in the A and P-sites. This Parafrankia sp. (strain EAN1pec) protein is Small ribosomal subunit protein uS13.